The chain runs to 126 residues: MAKFTQDELLEAFGEMTLVELSDFVKAFEEKFDVEAAAPVAAVAAAAPGAAPAEEEKDEFTVVLSAVGDKKIQVIKAVRAITNLGLAEAKALVDGAPKPVLENAKKEDAEKAKAQLEEAGATVELK.

Over residues Ala104–Leu116 the composition is skewed to basic and acidic residues. The disordered stretch occupies residues Ala104 to Lys126. Positions Glu117–Lys126 are enriched in low complexity.

This sequence belongs to the bacterial ribosomal protein bL12 family. In terms of assembly, homodimer. Part of the ribosomal stalk of the 50S ribosomal subunit. Forms a multimeric L10(L12)X complex, where L10 forms an elongated spine to which 2 to 4 L12 dimers bind in a sequential fashion. Binds GTP-bound translation factors.

In terms of biological role, forms part of the ribosomal stalk which helps the ribosome interact with GTP-bound translation factors. Is thus essential for accurate translation. This Bifidobacterium animalis subsp. lactis (strain AD011) protein is Large ribosomal subunit protein bL12.